A 222-amino-acid chain; its full sequence is Putative N-acetylmannosamine-6-phosphate 2-epimerase (222 aa).

Belongs to the NanE family.

The enzyme catalyses an N-acyl-D-glucosamine 6-phosphate = an N-acyl-D-mannosamine 6-phosphate. It functions in the pathway amino-sugar metabolism; N-acetylneuraminate degradation; D-fructose 6-phosphate from N-acetylneuraminate: step 3/5. In terms of biological role, converts N-acetylmannosamine-6-phosphate (ManNAc-6-P) to N-acetylglucosamine-6-phosphate (GlcNAc-6-P). The sequence is that of Putative N-acetylmannosamine-6-phosphate 2-epimerase from Oceanobacillus iheyensis (strain DSM 14371 / CIP 107618 / JCM 11309 / KCTC 3954 / HTE831).